The chain runs to 85 residues: Depressant insect toxin BmK ITa1 (85 aa).

The N-terminal stretch at M1–A21 is a signal peptide. The 61-residue stretch at D22–G82 folds into the LCN-type CS-alpha/beta domain. Cystine bridges form between C31–C81, C35–C56, C42–C63, and C46–C65. Position 82 is a glycine amide (G82).

It belongs to the long (4 C-C) scorpion toxin superfamily. Sodium channel inhibitor family. Beta subfamily. In terms of tissue distribution, expressed by the venom gland.

The protein localises to the secreted. Depressant insect toxins cause a transient contraction paralysis followed by a slow flaccid paralysis. They bind voltage-independently to sodium channels (Nav) and block action potentials, primarily by depolarizing the axonal membrane and suppressing the sodium current. This is Depressant insect toxin BmK ITa1 from Olivierus martensii (Manchurian scorpion).